A 467-amino-acid polypeptide reads, in one-letter code: ATP synthase subunit beta (467 aa).

G154–T161 contacts ATP.

Belongs to the ATPase alpha/beta chains family. In terms of assembly, F-type ATPases have 2 components, CF(1) - the catalytic core - and CF(0) - the membrane proton channel. CF(1) has five subunits: alpha(3), beta(3), gamma(1), delta(1), epsilon(1). CF(0) has three main subunits: a(1), b(2) and c(9-12). The alpha and beta chains form an alternating ring which encloses part of the gamma chain. CF(1) is attached to CF(0) by a central stalk formed by the gamma and epsilon chains, while a peripheral stalk is formed by the delta and b chains.

Its subcellular location is the cell inner membrane. The catalysed reaction is ATP + H2O + 4 H(+)(in) = ADP + phosphate + 5 H(+)(out). Produces ATP from ADP in the presence of a proton gradient across the membrane. The catalytic sites are hosted primarily by the beta subunits. The chain is ATP synthase subunit beta from Petrotoga mobilis (strain DSM 10674 / SJ95).